Here is a 151-residue protein sequence, read N- to C-terminus: Probable cGMP 3',5'-cyclic phosphodiesterase subunit delta (151 aa).

Belongs to the PDE6D/unc-119 family. As to quaternary structure, interacts with Pde6.

Its subcellular location is the nucleus. The protein localises to the cytoplasm. This chain is Probable cGMP 3',5'-cyclic phosphodiesterase subunit delta, found in Drosophila mojavensis (Fruit fly).